The primary structure comprises 63 residues: Large ribosomal subunit protein uL29 (63 aa).

The protein belongs to the universal ribosomal protein uL29 family.

The protein is Large ribosomal subunit protein uL29 of Colwellia psychrerythraea (strain 34H / ATCC BAA-681) (Vibrio psychroerythus).